The following is a 670-amino-acid chain: Probable ATP-citrate synthase subunit 1 (670 aa).

Positions 1 to 22 are disordered; that stretch reads MPSATTASTNGANGASASPAPG. ATP-binding positions include 257–277 and 308–334; these read LLRYQADPDCKILVLLGEVGG and FKTEVQFGHAGAFANSQLETAATKNKS. Glutamate 274 contributes to the Mg(2+) binding site. Residue histidine 316 is the Tele-phosphohistidine intermediate of the active site. Residue 335–345 coordinates CoA; sequence MREAGFYVPDT.

It belongs to the succinate/malate CoA ligase alpha subunit family. As to quaternary structure, composed of two subunits.

It is found in the cytoplasm. It carries out the reaction oxaloacetate + acetyl-CoA + ADP + phosphate = citrate + ATP + CoA. In terms of biological role, catalyzes the formation of cytosolic acetyl-CoA, which is mainly used for the biosynthesis of fatty acids and sterols. The protein is Probable ATP-citrate synthase subunit 1 of Neurospora crassa (strain ATCC 24698 / 74-OR23-1A / CBS 708.71 / DSM 1257 / FGSC 987).